The primary structure comprises 80 residues: Teretoxin Tsu6.5 (80 aa).

A signal peptide spans 1–21 (MAINGRLLCLCLVLGLVFESL). The propeptide occupies 22-42 (GHPSVQEKRAAEDSKPSGERR).

The protein belongs to the teretoxin M (TM) superfamily. Contains 3 disulfide bonds. In terms of tissue distribution, expressed by the venom duct.

It is found in the secreted. The polypeptide is Teretoxin Tsu6.5 (Terebra subulata (Chocolate spotted auger)).